The sequence spans 514 residues: Triacylglyceride transporter MAB_2807 (514 aa).

11 consecutive transmembrane segments (helical) span residues 19 to 39 (IAIG…YVVV), 58 to 78 (QVTP…PLLG), 88 to 108 (LILQ…ALST), 118 to 138 (VIQG…GADL), 157 to 177 (LGSV…GSWT), 178 to 198 (AIFW…QFSV), 210 to 230 (VDVV…VGLY), 239 to 259 (LPEW…AFIL), 278 to 298 (PFFA…VTLV), 316 to 336 (VFLL…GGWL), and 344 to 364 (IIAV…SGWP). Residues 371-380 (VHNFGFFTLP) form a beta-hairpin region. A run of 3 helical transmembrane segments spans residues 385–405 (DLVV…SAAL), 420–440 (VVVA…GWGI), and 485–505 (MFAI…FVGS).

This sequence belongs to the major facilitator superfamily. P55 (TC 2.A.1.3.34) family.

Its subcellular location is the cell inner membrane. In terms of biological role, in association with lipoprotein LprG probably transports triacyglycerides (TAG) across the inner cell membrane into the periplasm; TAG probably regulates lipid metabolism and growth regulation and plays a structural role in the outer membrane. TAG (and maybe other lipids) enters the central cavity of the P55 transporter from within the cell inner membrane via clefts on the cytoplasmic face of P55 between TM5-TM8 and TM2-TM11. From there the lipid is probably transferred to the hydrophobic cavity of LprG. Involved in drug susceptibilty, its expression partially complements the antibiotic susceptibilty of a double lprG-mfs deletion. Probably does not function as a bona fide drug efflux pump, but instead plays a role in outer membrane biogenesis. Probably required with LprG for normal surface localization of lipoarabinomannan (LAM). This chain is Triacylglyceride transporter MAB_2807, found in Mycobacteroides abscessus (strain ATCC 19977 / DSM 44196 / CCUG 20993 / CIP 104536 / JCM 13569 / NCTC 13031 / TMC 1543 / L948) (Mycobacterium abscessus).